Reading from the N-terminus, the 158-residue chain is Transcription elongation factor GreA (158 aa).

Positions 48–74 (EYDAAKNRQGFIEGRIKELNDKIARAE) form a coiled coil.

This sequence belongs to the GreA/GreB family.

Necessary for efficient RNA polymerase transcription elongation past template-encoded arresting sites. The arresting sites in DNA have the property of trapping a certain fraction of elongating RNA polymerases that pass through, resulting in locked ternary complexes. Cleavage of the nascent transcript by cleavage factors such as GreA or GreB allows the resumption of elongation from the new 3'terminus. GreA releases sequences of 2 to 3 nucleotides. In Syntrophotalea carbinolica (strain DSM 2380 / NBRC 103641 / GraBd1) (Pelobacter carbinolicus), this protein is Transcription elongation factor GreA.